Reading from the N-terminus, the 537-residue chain is CTP synthase (537 aa).

The interval 1–265 (MTKFIFVTGG…GKYLIKRLKL (265 aa)) is amidoligase domain. Serine 13 serves as a coordination point for CTP. Serine 13 is a binding site for UTP. Position 14 to 19 (14 to 19 (GLGKGI)) interacts with ATP. Residue tyrosine 54 coordinates L-glutamine. Aspartate 71 lines the ATP pocket. Mg(2+) is bound by residues aspartate 71 and glutamate 139. CTP-binding positions include 146–148 (DIE), 186–191 (KTKPTQ), and lysine 222. UTP contacts are provided by residues 186–191 (KTKPTQ) and lysine 222. Positions 290 to 532 (EIAIVGKYVK…VRAAKEYKQE (243 aa)) constitute a Glutamine amidotransferase type-1 domain. Glycine 351 contacts L-glutamine. The active-site Nucleophile; for glutamine hydrolysis is the cysteine 378. Residues 379 to 382 (FGFQ), glutamate 402, and arginine 459 contribute to the L-glutamine site. Catalysis depends on residues histidine 505 and glutamate 507.

Belongs to the CTP synthase family. In terms of assembly, homotetramer.

The enzyme catalyses UTP + L-glutamine + ATP + H2O = CTP + L-glutamate + ADP + phosphate + 2 H(+). It carries out the reaction L-glutamine + H2O = L-glutamate + NH4(+). It catalyses the reaction UTP + NH4(+) + ATP = CTP + ADP + phosphate + 2 H(+). It functions in the pathway pyrimidine metabolism; CTP biosynthesis via de novo pathway; CTP from UDP: step 2/2. Allosterically activated by GTP, when glutamine is the substrate; GTP has no effect on the reaction when ammonia is the substrate. The allosteric effector GTP functions by stabilizing the protein conformation that binds the tetrahedral intermediate(s) formed during glutamine hydrolysis. Inhibited by the product CTP, via allosteric rather than competitive inhibition. In terms of biological role, catalyzes the ATP-dependent amination of UTP to CTP with either L-glutamine or ammonia as the source of nitrogen. Regulates intracellular CTP levels through interactions with the four ribonucleotide triphosphates. The protein is CTP synthase of Pyrococcus horikoshii (strain ATCC 700860 / DSM 12428 / JCM 9974 / NBRC 100139 / OT-3).